Consider the following 444-residue polypeptide: Phosphoglucosamine mutase (444 aa).

Residue serine 102 is the Phosphoserine intermediate of the active site. Residues serine 102, aspartate 239, aspartate 241, and aspartate 243 each contribute to the Mg(2+) site. Serine 102 carries the phosphoserine modification.

It belongs to the phosphohexose mutase family. It depends on Mg(2+) as a cofactor. In terms of processing, activated by phosphorylation.

It carries out the reaction alpha-D-glucosamine 1-phosphate = D-glucosamine 6-phosphate. In terms of biological role, catalyzes the conversion of glucosamine-6-phosphate to glucosamine-1-phosphate. The protein is Phosphoglucosamine mutase of Mycolicibacterium paratuberculosis (strain ATCC BAA-968 / K-10) (Mycobacterium paratuberculosis).